The primary structure comprises 160 residues: S-ribosylhomocysteine lyase (160 aa).

H57, H61, and C127 together coordinate Fe cation.

The protein belongs to the LuxS family. In terms of assembly, homodimer. Requires Fe cation as cofactor.

It carries out the reaction S-(5-deoxy-D-ribos-5-yl)-L-homocysteine = (S)-4,5-dihydroxypentane-2,3-dione + L-homocysteine. Functionally, involved in the synthesis of autoinducer 2 (AI-2) which is secreted by bacteria and is used to communicate both the cell density and the metabolic potential of the environment. The regulation of gene expression in response to changes in cell density is called quorum sensing. Catalyzes the transformation of S-ribosylhomocysteine (RHC) to homocysteine (HC) and 4,5-dihydroxy-2,3-pentadione (DPD). The sequence is that of S-ribosylhomocysteine lyase from Streptococcus sanguinis (strain SK36).